Here is a 445-residue protein sequence, read N- to C-terminus: Argininosuccinate synthase (445 aa).

ATP-binding positions include 17–25 (AFSGGLDTS) and A43. Position 99 (Y99) interacts with L-citrulline. Residues G129 and T131 each contribute to the ATP site. 3 residues coordinate L-aspartate: T131, N135, and D136. An L-citrulline-binding site is contributed by N135. ATP is bound at residue D136. L-citrulline-binding residues include R139 and S192. D194 is an ATP binding site. L-citrulline is bound by residues T201, E203, and E280.

It belongs to the argininosuccinate synthase family. Type 2 subfamily. Homotetramer.

The protein resides in the cytoplasm. The enzyme catalyses L-citrulline + L-aspartate + ATP = 2-(N(omega)-L-arginino)succinate + AMP + diphosphate + H(+). It participates in amino-acid biosynthesis; L-arginine biosynthesis; L-arginine from L-ornithine and carbamoyl phosphate: step 2/3. The polypeptide is Argininosuccinate synthase (argG) (Burkholderia multivorans (strain ATCC 17616 / 249)).